Here is a 233-residue protein sequence, read N- to C-terminus: Mediator of RNA polymerase II transcription subunit 7 (233 aa).

Residue lysine 185 forms a Glycyl lysine isopeptide (Lys-Gly) (interchain with G-Cter in SUMO1); alternate linkage. Residue lysine 185 forms a Glycyl lysine isopeptide (Lys-Gly) (interchain with G-Cter in SUMO2); alternate linkage. The tract at residues 188 to 213 (PMDADDSNNCTGQSDQQRENSGHRRD) is disordered. Phosphoserine is present on serine 194. A compositionally biased stretch (basic and acidic residues) spans 203 to 213 (QQRENSGHRRD).

It belongs to the Mediator complex subunit 7 family. Component of the Mediator complex, which is composed of MED1, MED4, MED6, MED7, MED8, MED9, MED10, MED11, MED12, MED13, MED13L, MED14, MED15, MED16, MED17, MED18, MED19, MED20, MED21, MED22, MED23, MED24, MED25, MED26, MED27, MED29, MED30, MED31, CCNC, CDK8 and CDC2L6/CDK11. The MED12, MED13, CCNC and CDK8 subunits form a distinct module termed the CDK8 module. Mediator containing the CDK8 module is less active than Mediator lacking this module in supporting transcriptional activation. Individual preparations of the Mediator complex lacking one or more distinct subunits have been variously termed ARC, CRSP, DRIP, PC2, SMCC and TRAP.

The protein resides in the nucleus. In terms of biological role, component of the Mediator complex, a coactivator involved in the regulated transcription of nearly all RNA polymerase II-dependent genes. Mediator functions as a bridge to convey information from gene-specific regulatory proteins to the basal RNA polymerase II transcription machinery. Mediator is recruited to promoters by direct interactions with regulatory proteins and serves as a scaffold for the assembly of a functional preinitiation complex with RNA polymerase II and the general transcription factors. In Sus scrofa (Pig), this protein is Mediator of RNA polymerase II transcription subunit 7 (MED7).